Consider the following 59-residue polypeptide: Large ribosomal subunit protein uL30 (59 aa).

It belongs to the universal ribosomal protein uL30 family. In terms of assembly, part of the 50S ribosomal subunit.

This is Large ribosomal subunit protein uL30 from Photobacterium profundum (strain SS9).